The following is a 249-amino-acid chain: MSSLHEHLRPIPEPFSLTLLLGTRETPVTFLFHYYLYHALKAKESTCFLTFSKTLDEHAISMRKWGMDIKTKKNFFFIDGFSMLFAPISKPSKVQAPETKNHIKSVFAPVIQCVEENDFEFENSTIIIEDIDILQSTHALDSTKIQQAILELRKCFSRVIVNVTLGAPLPQQKSLGSSIGHMATRCISCRPLTSGSARRITGFLRLSRMPNHFRSGICETPEDDDKELLYEVTEAGAKVYSKGQVTLQL.

It belongs to the ELP6 family. In terms of assembly, component of the elongator complex.

It localises to the cytoplasm. It is found in the nucleus. The protein operates within tRNA modification; 5-methoxycarbonylmethyl-2-thiouridine-tRNA biosynthesis. Functionally, component of the elongator complex which is required for multiple tRNA modifications, including mcm5U (5-methoxycarbonylmethyl uridine), mcm5s2U (5-methoxycarbonylmethyl-2-thiouridine), and ncm5U (5-carbamoylmethyl uridine). The elongator complex catalyzes formation of carboxymethyluridine in the wobble base at position 34 in tRNAs. This Schizosaccharomyces pombe (strain 972 / ATCC 24843) (Fission yeast) protein is Elongator complex protein 6 homolog.